We begin with the raw amino-acid sequence, 360 residues long: Phospho-N-acetylmuramoyl-pentapeptide-transferase (360 aa).

A run of 10 helical transmembrane segments spans residues 25–45, 73–93, 97–117, 142–162, 168–188, 199–219, 236–256, 263–283, 288–308, and 338–358; these read RGILGVLTALCLSLFLGPWMI, TMGGALILSSIGISTLLWADL, YVWVVLLVTLLFGAIGWVDDY, VGAAIFLYTTAPSAVETTLII, ASIPLGIGFVVLTYFVIVGSS, GLAIMPTVMVGGALGIFCYLS, AGELIVFCGALIGAGLGFLWF, VFMGDVGALALGAALGTIAVI, IVLFIMGGVFVMETLSVVIQV, and VIVRFWIITVILVLVGLATLK.

The protein belongs to the glycosyltransferase 4 family. MraY subfamily. It depends on Mg(2+) as a cofactor.

It localises to the cell inner membrane. It carries out the reaction UDP-N-acetyl-alpha-D-muramoyl-L-alanyl-gamma-D-glutamyl-meso-2,6-diaminopimeloyl-D-alanyl-D-alanine + di-trans,octa-cis-undecaprenyl phosphate = di-trans,octa-cis-undecaprenyl diphospho-N-acetyl-alpha-D-muramoyl-L-alanyl-D-glutamyl-meso-2,6-diaminopimeloyl-D-alanyl-D-alanine + UMP. It functions in the pathway cell wall biogenesis; peptidoglycan biosynthesis. Catalyzes the initial step of the lipid cycle reactions in the biosynthesis of the cell wall peptidoglycan: transfers peptidoglycan precursor phospho-MurNAc-pentapeptide from UDP-MurNAc-pentapeptide onto the lipid carrier undecaprenyl phosphate, yielding undecaprenyl-pyrophosphoryl-MurNAc-pentapeptide, known as lipid I. The sequence is that of Phospho-N-acetylmuramoyl-pentapeptide-transferase from Pseudomonas fluorescens (strain SBW25).